A 355-amino-acid chain; its full sequence is UDP-N-acetylglucosamine--N-acetylmuramyl-(pentapeptide) pyrophosphoryl-undecaprenol N-acetylglucosamine transferase (355 aa).

UDP-N-acetyl-alpha-D-glucosamine is bound by residues 11–13 (TAG), arginine 164, serine 194, and glutamine 289.

The protein belongs to the glycosyltransferase 28 family. MurG subfamily.

It localises to the cell membrane. The enzyme catalyses di-trans,octa-cis-undecaprenyl diphospho-N-acetyl-alpha-D-muramoyl-L-alanyl-D-glutamyl-meso-2,6-diaminopimeloyl-D-alanyl-D-alanine + UDP-N-acetyl-alpha-D-glucosamine = di-trans,octa-cis-undecaprenyl diphospho-[N-acetyl-alpha-D-glucosaminyl-(1-&gt;4)]-N-acetyl-alpha-D-muramoyl-L-alanyl-D-glutamyl-meso-2,6-diaminopimeloyl-D-alanyl-D-alanine + UDP + H(+). The protein operates within cell wall biogenesis; peptidoglycan biosynthesis. Functionally, cell wall formation. Catalyzes the transfer of a GlcNAc subunit on undecaprenyl-pyrophosphoryl-MurNAc-pentapeptide (lipid intermediate I) to form undecaprenyl-pyrophosphoryl-MurNAc-(pentapeptide)GlcNAc (lipid intermediate II). The protein is UDP-N-acetylglucosamine--N-acetylmuramyl-(pentapeptide) pyrophosphoryl-undecaprenol N-acetylglucosamine transferase of Lachnoclostridium phytofermentans (strain ATCC 700394 / DSM 18823 / ISDg) (Clostridium phytofermentans).